The following is a 669-amino-acid chain: Very long-chain fatty acid transport protein (669 aa).

At 1–5 (MSPIQ) the chain is on the cytoplasmic side. Residues 6–26 (VVVFALSRIFLLLFRLIKLII) traverse the membrane as a helical segment. Topologically, residues 27 to 148 (TPIQKSLGYL…YVAIDCTNKP (122 aa)) are extracellular. Residues 149–169 (LFVFLWLSLWNIGAIPAFLNY) traverse the membrane as a helical segment. At 170-270 (NTKGTPLVHS…TGLPKSAIMS (101 aa)) the chain is on the cytoplasmic side. An ATP-binding site is contributed by 256–267 (YTSGTTGLPKSA). Residues 271–339 (WRKSSVGCQV…FWKQVYLTGA (69 aa)) lie within the membrane without spanning it. The Cytoplasmic segment spans residues 340–669 (THIQYVGEVC…EAIDAQTIKL (330 aa)). Positions 501 to 551 (DAWYRCGDLLKADEYGLWYFLDRMGDTFRWKSENVSTTEVEDQLTASNKEQ) match the FACS motif. The short motif at 667 to 669 (IKL) is the C-terminal peroxisome targeting signal (PTS1) element.

The protein belongs to the ATP-dependent AMP-binding enzyme family. Interacts with fatty acyl-CoA synthetases FAA1 and FAA4.

Its subcellular location is the lipid droplet. It is found in the cell membrane. It localises to the peroxisome membrane. The protein localises to the peroxisome. The enzyme catalyses a very long-chain fatty acid + ATP + CoA = a very long-chain fatty acyl-CoA + AMP + diphosphate. The catalysed reaction is tetracosanoate + ATP + CoA = tetracosanoyl-CoA + AMP + diphosphate. In terms of biological role, acyl-CoA synthetase required for both the import of long chain fatty acids (LCFAs) (C14-C18) and the activation very long chain fatty acids (VLCFAs) (C20-C26) by esterification of the fatty acids into metabolically active CoA-thioesters for subsequent degradation or incorporation into phospholipids. The transport and fatty acyl-CoA synthetase activities are genetically separable and are thus independent activities. Esterifies VLCFAs in the peroxisome matrix. The VLCFAs are actively transported into peroxisomes by a PXA1-PXA2 heterodimeric transporter in the peroxisomal membrane. This is Very long-chain fatty acid transport protein (FAT1) from Saccharomyces cerevisiae (strain ATCC 204508 / S288c) (Baker's yeast).